A 458-amino-acid polypeptide reads, in one-letter code: Flavohemoprotein (458 aa).

The 157-residue stretch at 2-158 (PLSEDTIKAV…LAHLFVRREE (157 aa)) folds into the Globin domain. His-107 is a heme b binding site. Active-site charge relay system residues include Tyr-117 and Glu-157. Residues 169–457 (GGWRQTRSFR…FEMFGPFKPL (289 aa)) form a reductase region. The FAD-binding FR-type domain occupies 172–279 (RQTRSFRVEE…APPYGDFFLE (108 aa)). Residues Tyr-211 and 228 to 231 (RQYS) each bind FAD. Residue 320–325 (GIGQTP) coordinates NADP(+). 450–453 (MFGP) serves as a coordination point for FAD.

This sequence belongs to the globin family. Two-domain flavohemoproteins subfamily. In the C-terminal section; belongs to the flavoprotein pyridine nucleotide cytochrome reductase family. Monomer. Heme b serves as cofactor. The cofactor is FAD.

The enzyme catalyses 2 nitric oxide + NADPH + 2 O2 = 2 nitrate + NADP(+) + H(+). It carries out the reaction 2 nitric oxide + NADH + 2 O2 = 2 nitrate + NAD(+) + H(+). In terms of biological role, flavohemoprotein involved in nitric oxide (NO) detoxification in an aerobic process, termed nitric oxide dioxygenase (NOD) reaction that utilizes O(2) and NAD(P)H to convert NO to nitrate, which protects the protozoan parasite from various noxious nitrogen compounds. Therefore, plays a central role in the inducible response to nitrosative stress. May also be involved in O(2) detoxification. The sequence is that of Flavohemoprotein (hmpA) from Giardia intestinalis (strain ATCC 50581 / GS clone H7) (Giardia lamblia).